Here is a 71-residue protein sequence, read N- to C-terminus: V-type proton ATPase subunit e (71 aa).

Residues 1–2 (MS) are Lumenal-facing. The helical transmembrane segment at 3 to 23 (FFHVVFVAFVIAAIGAAGWFV) threads the bilayer. The Cytoplasmic segment spans residues 24-35 (TPKGKNQTLLRT). Residues 36-56 (SLLLTLTCCYLMWAITYLCQL) form a helical membrane-spanning segment. Residues 57–71 (HPLITPRRSDLRMEY) are Lumenal-facing.

This sequence belongs to the V-ATPase e1/e2 subunit family. V-ATPase is a heteromultimeric enzyme composed of a peripheral catalytic V1 complex (components A to H) attached to an integral membrane V0 proton pore complex (components: a, c, c', c'', d, e, f and VOA1).

The protein localises to the vacuole membrane. Its function is as follows. Subunit of the V0 complex of vacuolar(H+)-ATPase (V-ATPase), a multisubunit enzyme composed of a peripheral complex (V1) that hydrolyzes ATP and a membrane integral complex (V0) that translocates protons. V-ATPase is responsible for acidifying and maintaining the pH of intracellular compartments. The polypeptide is V-type proton ATPase subunit e (VMA9) (Cryptococcus neoformans var. neoformans serotype D (strain JEC21 / ATCC MYA-565) (Filobasidiella neoformans)).